The chain runs to 37 residues: Large ribosomal subunit protein bL36c (37 aa).

This sequence belongs to the bacterial ribosomal protein bL36 family.

The protein resides in the plastid. The protein localises to the chloroplast. In Cyanidium caldarium (Red alga), this protein is Large ribosomal subunit protein bL36c (rpl36).